Here is a 312-residue protein sequence, read N- to C-terminus: Ribonuclease Z (312 aa).

7 residues coordinate Zn(2+): His-62, His-64, Asp-66, His-67, His-144, Asp-215, and His-273. The active-site Proton acceptor is Asp-66.

It belongs to the RNase Z family. In terms of assembly, homodimer. The cofactor is Zn(2+).

The catalysed reaction is Endonucleolytic cleavage of RNA, removing extra 3' nucleotides from tRNA precursor, generating 3' termini of tRNAs. A 3'-hydroxy group is left at the tRNA terminus and a 5'-phosphoryl group is left at the trailer molecule.. Its function is as follows. Zinc phosphodiesterase, which displays some tRNA 3'-processing endonuclease activity. Probably involved in tRNA maturation, by removing a 3'-trailer from precursor tRNA. The protein is Ribonuclease Z of Prochlorococcus marinus (strain MIT 9215).